We begin with the raw amino-acid sequence, 256 residues long: Protein RGF1 INDUCIBLE TRANSCRIPTION FACTOR 1 (256 aa).

The segment at 21 to 59 adopts a B box-type zinc-finger fold; sequence CPYHETAKKNERNVCCLDCCTSLCPHCVPSHRFHRLLQV.

In terms of tissue distribution, expressed predominantly in root meristematic zones.

The protein localises to the nucleus. Probable transcription factor that plays a central role in mediating RGF1 hormone peptide signaling leading to the production of reactive oxygen species (ROS) in roots to modulate meristem size and root growth, probably via oxidative post-translational modification of the transcription factor PLETHORA (e.g. PLT1 and PLT2). The sequence is that of Protein RGF1 INDUCIBLE TRANSCRIPTION FACTOR 1 from Arabidopsis thaliana (Mouse-ear cress).